Here is a 215-residue protein sequence, read N- to C-terminus: Pyrrolidone-carboxylate peptidase (215 aa).

Residues Glu80, Cys143, and His167 contribute to the active site.

This sequence belongs to the peptidase C15 family. In terms of assembly, homotetramer.

Its subcellular location is the cytoplasm. The catalysed reaction is Release of an N-terminal pyroglutamyl group from a polypeptide, the second amino acid generally not being Pro.. Functionally, removes 5-oxoproline from various penultimate amino acid residues except L-proline. In Bacillus thuringiensis subsp. konkukian (strain 97-27), this protein is Pyrrolidone-carboxylate peptidase.